Reading from the N-terminus, the 315-residue chain is ATP synthase gamma chain (315 aa).

The protein belongs to the ATPase gamma chain family. In terms of assembly, F-type ATPases have 2 components, CF(1) - the catalytic core - and CF(0) - the membrane proton channel. CF(1) has five subunits: alpha(3), beta(3), gamma(1), delta(1), epsilon(1). CF(0) has three main subunits: a, b and c.

Its subcellular location is the cellular thylakoid membrane. In terms of biological role, produces ATP from ADP in the presence of a proton gradient across the membrane. The gamma chain is believed to be important in regulating ATPase activity and the flow of protons through the CF(0) complex. This chain is ATP synthase gamma chain, found in Synechococcus sp. (strain PCC 6716).